The sequence spans 426 residues: Tyrosine--tRNA ligase (426 aa).

Residue tyrosine 35 participates in L-tyrosine binding. Residues 40-49 carry the 'HIGH' region motif; sequence PTADSLHIGH. The L-tyrosine site is built by tyrosine 172 and glutamine 176. Residues 232–236 carry the 'KMSKS' region motif; sequence KLGKS. Lysine 235 provides a ligand contact to ATP. An S4 RNA-binding domain is found at 357–414; it reads ENIKDILVNSKLSKSKNNAKSVILSSSIRINNKKQKSIDFMFKKEDKLFNLFTLIKKG.

Belongs to the class-I aminoacyl-tRNA synthetase family. TyrS type 1 subfamily. In terms of assembly, homodimer.

The protein localises to the cytoplasm. It catalyses the reaction tRNA(Tyr) + L-tyrosine + ATP = L-tyrosyl-tRNA(Tyr) + AMP + diphosphate + H(+). Its function is as follows. Catalyzes the attachment of tyrosine to tRNA(Tyr) in a two-step reaction: tyrosine is first activated by ATP to form Tyr-AMP and then transferred to the acceptor end of tRNA(Tyr). The polypeptide is Tyrosine--tRNA ligase (Wigglesworthia glossinidia brevipalpis).